The sequence spans 347 residues: NADH-ubiquinone oxidoreductase chain 2 (347 aa).

The next 10 helical transmembrane spans lie at Ile13–Leu33, Ala56–Phe76, Leu96–Pro116, Pro123–Tyr143, Leu149–Gly169, Ile178–Pro198, Thr201–Leu221, Thr247–Ile267, Asn274–Leu294, and Leu326–Ile346.

This sequence belongs to the complex I subunit 2 family. In terms of assembly, core subunit of respiratory chain NADH dehydrogenase (Complex I) which is composed of 45 different subunits. Interacts with TMEM242.

It localises to the mitochondrion inner membrane. The enzyme catalyses a ubiquinone + NADH + 5 H(+)(in) = a ubiquinol + NAD(+) + 4 H(+)(out). Functionally, core subunit of the mitochondrial membrane respiratory chain NADH dehydrogenase (Complex I) which catalyzes electron transfer from NADH through the respiratory chain, using ubiquinone as an electron acceptor. Essential for the catalytic activity and assembly of complex I. This chain is NADH-ubiquinone oxidoreductase chain 2, found in Homo sapiens (Human).